Reading from the N-terminus, the 232-residue chain is Y-linked testis-specific protein 1 (232 aa).

This sequence belongs to the SPIN/STSY family. In terms of tissue distribution, expressed in testis (at protein level).

The sequence is that of Y-linked testis-specific protein 1 (Ssty1) from Mus musculus (Mouse).